The sequence spans 414 residues: Ribulose bisphosphate carboxylase large chain (414 aa).

Residues asparagine 101 and threonine 151 each coordinate substrate. The active-site Proton acceptor is lysine 153. Lysine 155 provides a ligand contact to substrate. Residues lysine 179, aspartate 181, and glutamate 182 each coordinate Mg(2+). Lysine 179 carries the post-translational modification N6-carboxylysine. Histidine 272 serves as the catalytic Proton acceptor. Residues arginine 273, histidine 305, and serine 357 each contribute to the substrate site.

It belongs to the RuBisCO large chain family. Type I subfamily. As to quaternary structure, heterohexadecamer of 8 large chains and 8 small chains; disulfide-linked. The disulfide link is formed within the large subunit homodimers. The cofactor is Mg(2+). Post-translationally, the disulfide bond which can form in the large chain dimeric partners within the hexadecamer appears to be associated with oxidative stress and protein turnover.

Its subcellular location is the plastid. The protein localises to the chloroplast. It catalyses the reaction 2 (2R)-3-phosphoglycerate + 2 H(+) = D-ribulose 1,5-bisphosphate + CO2 + H2O. The enzyme catalyses D-ribulose 1,5-bisphosphate + O2 = 2-phosphoglycolate + (2R)-3-phosphoglycerate + 2 H(+). RuBisCO catalyzes two reactions: the carboxylation of D-ribulose 1,5-bisphosphate, the primary event in carbon dioxide fixation, as well as the oxidative fragmentation of the pentose substrate in the photorespiration process. Both reactions occur simultaneously and in competition at the same active site. The protein is Ribulose bisphosphate carboxylase large chain (rbcL) of Onychium japonicum (Japanese claw fern).